We begin with the raw amino-acid sequence, 82 residues long: Probable glutamyl-tRNA(Gln) amidotransferase subunit C (82 aa).

Belongs to the GatC family. Heterotrimer of A, B and C subunits.

The enzyme catalyses L-glutamyl-tRNA(Gln) + L-glutamine + ATP + H2O = L-glutaminyl-tRNA(Gln) + L-glutamate + ADP + phosphate + H(+). It catalyses the reaction L-aspartyl-tRNA(Asn) + L-glutamine + ATP + H2O = L-asparaginyl-tRNA(Asn) + L-glutamate + ADP + phosphate + 2 H(+). Functionally, allows the formation of correctly charged Asn-tRNA(Asn) or Gln-tRNA(Gln) through the transamidation of misacylated Asp-tRNA(Asn) or Glu-tRNA(Gln) in organisms which lack either or both of asparaginyl-tRNA or glutaminyl-tRNA synthetases. The reaction takes place in the presence of glutamine and ATP through an activated phospho-Asp-tRNA(Asn) or phospho-Glu-tRNA(Gln). The sequence is that of Probable glutamyl-tRNA(Gln) amidotransferase subunit C from Methanocaldococcus jannaschii (strain ATCC 43067 / DSM 2661 / JAL-1 / JCM 10045 / NBRC 100440) (Methanococcus jannaschii).